A 150-amino-acid polypeptide reads, in one-letter code: UPF0178 protein Shewana3_1627 (150 aa).

The protein belongs to the UPF0178 family.

The protein is UPF0178 protein Shewana3_1627 of Shewanella sp. (strain ANA-3).